We begin with the raw amino-acid sequence, 316 residues long: 4-hydroxy-3-methylbut-2-enyl diphosphate reductase (316 aa).

Residue Cys-12 coordinates [4Fe-4S] cluster. (2E)-4-hydroxy-3-methylbut-2-enyl diphosphate contacts are provided by His-41 and His-74. Dimethylallyl diphosphate is bound by residues His-41 and His-74. His-41 and His-74 together coordinate isopentenyl diphosphate. Position 96 (Cys-96) interacts with [4Fe-4S] cluster. Residue His-124 coordinates (2E)-4-hydroxy-3-methylbut-2-enyl diphosphate. His-124 contacts dimethylallyl diphosphate. Isopentenyl diphosphate is bound at residue His-124. The active-site Proton donor is the Glu-126. Residue Thr-167 coordinates (2E)-4-hydroxy-3-methylbut-2-enyl diphosphate. Cys-197 contributes to the [4Fe-4S] cluster binding site. Ser-225, Ser-226, Asn-227, and Ser-269 together coordinate (2E)-4-hydroxy-3-methylbut-2-enyl diphosphate. Positions 225, 226, 227, and 269 each coordinate dimethylallyl diphosphate. The isopentenyl diphosphate site is built by Ser-225, Ser-226, Asn-227, and Ser-269.

Belongs to the IspH family. Homodimer. [4Fe-4S] cluster serves as cofactor.

The catalysed reaction is isopentenyl diphosphate + 2 oxidized [2Fe-2S]-[ferredoxin] + H2O = (2E)-4-hydroxy-3-methylbut-2-enyl diphosphate + 2 reduced [2Fe-2S]-[ferredoxin] + 2 H(+). It carries out the reaction dimethylallyl diphosphate + 2 oxidized [2Fe-2S]-[ferredoxin] + H2O = (2E)-4-hydroxy-3-methylbut-2-enyl diphosphate + 2 reduced [2Fe-2S]-[ferredoxin] + 2 H(+). It participates in isoprenoid biosynthesis; dimethylallyl diphosphate biosynthesis; dimethylallyl diphosphate from (2E)-4-hydroxy-3-methylbutenyl diphosphate: step 1/1. The protein operates within isoprenoid biosynthesis; isopentenyl diphosphate biosynthesis via DXP pathway; isopentenyl diphosphate from 1-deoxy-D-xylulose 5-phosphate: step 6/6. Its function is as follows. Catalyzes the conversion of 1-hydroxy-2-methyl-2-(E)-butenyl 4-diphosphate (HMBPP) into a mixture of isopentenyl diphosphate (IPP) and dimethylallyl diphosphate (DMAPP). Acts in the terminal step of the DOXP/MEP pathway for isoprenoid precursor biosynthesis. The sequence is that of 4-hydroxy-3-methylbut-2-enyl diphosphate reductase from Escherichia coli O6:H1 (strain CFT073 / ATCC 700928 / UPEC).